The following is a 92-amino-acid chain: C-C motif chemokine 3 (92 aa).

Positions 1–23 are cleaved as a signal peptide; it reads MQVSTAALAVLLCTMALCNQFSA. Cystine bridges form between Cys-33–Cys-57 and Cys-34–Cys-73.

It belongs to the intercrine beta (chemokine CC) family. In terms of assembly, self-associates. Also heterodimer of MIP-1-alpha(4-69) and MIP-1-beta(3-69). Interacts with CCR1.

It is found in the secreted. In terms of biological role, monokine with inflammatory and chemokinetic properties. Binds to CCR1, CCR4 and CCR5. One of the major HIV-suppressive factors produced by CD8+ T-cells. Recombinant MIP-1-alpha induces a dose-dependent inhibition of different strains of HIV-1, HIV-2, and simian immunodeficiency virus (SIV). The protein is C-C motif chemokine 3 (CCL3) of Pan troglodytes (Chimpanzee).